We begin with the raw amino-acid sequence, 250 residues long: ATP synthase subunit a (250 aa).

The next 6 helical transmembrane spans lie at 29–49 (ASLF…FATS), 84–104 (FFPL…LGMF), 114–134 (IIVT…YGFY), 143–163 (VFVP…IEII), 193–213 (FVAS…LPLI), and 216–236 (VALT…FAVL).

It belongs to the ATPase A chain family. As to quaternary structure, F-type ATPases have 2 components, CF(1) - the catalytic core - and CF(0) - the membrane proton channel. CF(1) has five subunits: alpha(3), beta(3), gamma(1), delta(1), epsilon(1). CF(0) has three main subunits: a(1), b(2) and c(9-12). The alpha and beta chains form an alternating ring which encloses part of the gamma chain. CF(1) is attached to CF(0) by a central stalk formed by the gamma and epsilon chains, while a peripheral stalk is formed by the delta and b chains.

It is found in the cell inner membrane. Key component of the proton channel; it plays a direct role in the translocation of protons across the membrane. This chain is ATP synthase subunit a, found in Rhizobium leguminosarum bv. trifolii (strain WSM2304).